Here is a 364-residue protein sequence, read N- to C-terminus: Histidinol-phosphate aminotransferase (364 aa).

Residue Lys226 is modified to N6-(pyridoxal phosphate)lysine.

Belongs to the class-II pyridoxal-phosphate-dependent aminotransferase family. Histidinol-phosphate aminotransferase subfamily. In terms of assembly, homodimer. Pyridoxal 5'-phosphate is required as a cofactor.

The catalysed reaction is L-histidinol phosphate + 2-oxoglutarate = 3-(imidazol-4-yl)-2-oxopropyl phosphate + L-glutamate. Its pathway is amino-acid biosynthesis; L-histidine biosynthesis; L-histidine from 5-phospho-alpha-D-ribose 1-diphosphate: step 7/9. In Campylobacter jejuni subsp. jejuni serotype O:2 (strain ATCC 700819 / NCTC 11168), this protein is Histidinol-phosphate aminotransferase.